The sequence spans 352 residues: 4-hydroxy-2-oxovalerate aldolase 5 (352 aa).

In terms of domain architecture, Pyruvate carboxyltransferase spans 9 to 261; sequence IRVTDSSLRD…RTGIDTLKII (253 aa). 17 to 18 is a substrate binding site; the sequence is RD. Asp18 provides a ligand contact to Mn(2+). The active-site Proton acceptor is the His21. Substrate contacts are provided by Ser171 and His200. 2 residues coordinate Mn(2+): His200 and His202. Tyr291 contacts substrate.

The protein belongs to the 4-hydroxy-2-oxovalerate aldolase family.

The catalysed reaction is (S)-4-hydroxy-2-oxopentanoate = acetaldehyde + pyruvate. The protein is 4-hydroxy-2-oxovalerate aldolase 5 of Rhodococcus opacus (strain B4).